A 131-amino-acid polypeptide reads, in one-letter code: UPF0102 protein YraN (131 aa).

This sequence belongs to the UPF0102 family.

This Salmonella arizonae (strain ATCC BAA-731 / CDC346-86 / RSK2980) protein is UPF0102 protein YraN.